The primary structure comprises 368 residues: GTPase Obg (368 aa).

The Obg domain maps to 1 to 159; that stretch reads MQFIDQAEIE…RQLRLELKLL (159 aa). An OBG-type G domain is found at 160–328; the sequence is AEVGIIGLPN…LMQLVWQWLD (169 aa). Residues 166–173, 191–195, 213–216, 280–283, and 309–311 contribute to the GTP site; these read GLPNAGKS, FTTLV, DIPG, NKID, and SAA. Mg(2+)-binding residues include S173 and T193.

This sequence belongs to the TRAFAC class OBG-HflX-like GTPase superfamily. OBG GTPase family. In terms of assembly, monomer. Mg(2+) serves as cofactor.

It localises to the cytoplasm. An essential GTPase which binds GTP, GDP and possibly (p)ppGpp with moderate affinity, with high nucleotide exchange rates and a fairly low GTP hydrolysis rate. Plays a role in control of the cell cycle, stress response, ribosome biogenesis and in those bacteria that undergo differentiation, in morphogenesis control. This Synechocystis sp. (strain ATCC 27184 / PCC 6803 / Kazusa) protein is GTPase Obg.